Reading from the N-terminus, the 416-residue chain is 2,3-bisphosphoglycerate-independent phosphoglycerate mutase (416 aa).

The protein belongs to the BPG-independent phosphoglycerate mutase family. A-PGAM subfamily.

It catalyses the reaction (2R)-2-phosphoglycerate = (2R)-3-phosphoglycerate. The protein operates within carbohydrate degradation; glycolysis; pyruvate from D-glyceraldehyde 3-phosphate: step 3/5. Catalyzes the interconversion of 2-phosphoglycerate and 3-phosphoglycerate. This chain is 2,3-bisphosphoglycerate-independent phosphoglycerate mutase, found in Ignicoccus hospitalis (strain KIN4/I / DSM 18386 / JCM 14125).